We begin with the raw amino-acid sequence, 621 residues long: TOX high mobility group box family member 4 (621 aa).

Disordered stretches follow at residues leucine 153–valine 227 and leucine 305–glutamate 333. A Phosphothreonine modification is found at threonine 176. 3 positions are modified to phosphoserine: serine 178, serine 181, and serine 182. Over residues leucine 183 to arginine 193 the composition is skewed to basic and acidic residues. Residues lysine 208–lysine 218 are compositionally biased toward basic residues. Positions lysine 213–lysine 218 match the Nuclear localization signal motif. Positions proline 223–lysine 291 form a DNA-binding region, HMG box. Over residues proline 307 to methionine 319 the composition is skewed to pro residues. Phosphothreonine is present on threonine 313. Phosphoserine is present on serine 315. A compositionally biased stretch (low complexity) spans alanine 320–glutamate 333. Arginine 481 is modified (asymmetric dimethylarginine). Residues proline 510–glutamate 525 show a composition bias toward polar residues. Residues proline 510–valine 529 are disordered. Residues serine 533, serine 550, serine 552, serine 560, serine 562, and serine 567 each carry the phosphoserine modification.

As to quaternary structure, component of the PNUTS-PP1 phosphatase complex, composed of PPP1R10/PNUTS, TOX4, WDR82 and PPP1CA or PPP1CB or PPP1CC. Interacts with PPP1R10/PNUTS. Interacts with FOXO1 and CREB1 (increased by cAMP); FOXO1 and CREB1 are required for full induction of TOX4-dependent activity and the interactions are inhibited by insulin. Expressed in liver (at protein level).

The protein localises to the nucleus. The protein resides in the chromosome. With respect to regulation, in liver, recruited to target gene promoters following treatment with dexamethasone and cAMP. Binding is decreased in presence of insulin. Its function is as follows. Transcription factor that modulates cell fate reprogramming from the somatic state to the pluripotent and neuronal fate. In liver, controls the expression of hormone-regulated gluconeogenic genes such as G6PC1 and PCK1. This regulation is independent of the insulin receptor activation. Also acts as a regulatory component of protein phosphatase 1 (PP1) complexes. Component of the PNUTS-PP1 protein phosphatase complex, a PP1 complex that regulates RNA polymerase II transcription pause-release. PNUTS-PP1 also plays a role in the control of chromatin structure and cell cycle progression during the transition from mitosis into interphase. The polypeptide is TOX high mobility group box family member 4 (Homo sapiens (Human)).